The chain runs to 345 residues: Ryncolin-1 (345 aa).

Residues 1–19 (MKPWAAFHLIFLVASSLEG) form the signal peptide. Positions 48–118 (ILQSQPGIPG…DKGDKGEDCN (71 aa)) are disordered. Residues 57–114 (GIPGVPGTNGSEGLKGDPGPQGPPGIRGPDGIRGEAGPKGDKGDQGDKGDKGDKGDKG) enclose the Collagen-like domain. Over residues 86–116 (DGIRGEAGPKGDKGDQGDKGDKGDKGDKGED) the composition is skewed to basic and acidic residues. The Fibrinogen C-terminal domain occupies 121–339 (GCLPTEVRNC…YADMKIRPQQ (219 aa)). Disulfide bonds link Cys-130/Cys-158 and Cys-282/Cys-295.

It belongs to the ficolin lectin family. Veficolin subfamily. In terms of processing, hydroxylated, possibly at Pro-80. In terms of tissue distribution, expressed by the venom duct.

The protein resides in the secreted. Its function is as follows. Initiates complement activation and/or interferes in platelet aggregation and/or blood coagulation. The polypeptide is Ryncolin-1 (Cerberus rynchops (Dog-faced water snake)).